The primary structure comprises 429 residues: Glucose-6-phosphate exchanger SLC37A4 (429 aa).

Transmembrane regions (helical) follow at residues 84–104 (LLLVGLVNIFFAWSSTVPVFA), 105–125 (ALWFLNGLAQGLGWPPCGKVL), 139–159 (AILSTSMNLAGGLGPILATIL), 167–187 (STLALSGALCVVVSFLCLLLI), 219–239 (ELLLSPYLWVLSTGYLVVFGV), 260–280 (LVGSSYMSALEVGGLVGSIAA), 302–322 (GLLLFMMAGMTVSMYLFRVTV), 329–349 (LWILVLGAVFGFSSYGPIALF), 368–388 (IVGLMANVGGFLAGLPFSTIA), and 394–414 (STAFWVAEVICAASTAAFFLL).

Belongs to the major facilitator superfamily. Organophosphate:Pi antiporter (OPA) (TC 2.A.1.4) family. Mostly expressed in liver and kidney.

It localises to the endoplasmic reticulum membrane. It catalyses the reaction D-glucose 6-phosphate(in) + phosphate(out) = D-glucose 6-phosphate(out) + phosphate(in). With respect to regulation, inhibited by vanadate and chlorogenic acid. In terms of biological role, inorganic phosphate and glucose-6-phosphate antiporter of the endoplasmic reticulum. Transports cytoplasmic glucose-6-phosphate into the lumen of the endoplasmic reticulum and translocates inorganic phosphate into the opposite direction. Forms with glucose-6-phosphatase the complex responsible for glucose production through glycogenolysis and gluconeogenesis. Hence, it plays a central role in homeostatic regulation of blood glucose levels. In Homo sapiens (Human), this protein is Glucose-6-phosphate exchanger SLC37A4.